A 91-amino-acid chain; its full sequence is Small ribosomal subunit protein uS19 (91 aa).

It belongs to the universal ribosomal protein uS19 family.

Its function is as follows. Protein S19 forms a complex with S13 that binds strongly to the 16S ribosomal RNA. The sequence is that of Small ribosomal subunit protein uS19 from Synechococcus sp. (strain CC9311).